The sequence spans 343 residues: D-beta-hydroxybutyrate dehydrogenase, mitochondrial (343 aa).

A mitochondrion-targeting transit peptide spans 1-46 (MLAARLSRPLSQLPGKALSVRDRENGTRHTLLFYPASFSPDTRRTY). 60–84 (ITGCDSGFGFSLAKHLHSKGFLVFA) contributes to the NAD(+) binding site. An N6-acetyllysine mark is found at Lys-73 and Lys-97. Lys-103 bears the N6-acetyllysine; alternate mark. Residue Lys-103 is modified to N6-succinyllysine; alternate. N6-acetyllysine is present on residues Lys-132 and Lys-177. A substrate-binding site is contributed by Met-196. The active-site Proton acceptor is Cys-209. Residue Lys-212 is modified to N6-acetyllysine. An O-linked (GlcNAc) serine glycan is attached at Ser-219. Ser-246 is subject to Phosphoserine. An N6-acetyllysine modification is found at Lys-258. Lys-259 is modified (N6-acetyllysine; alternate). An N6-succinyllysine; alternate modification is found at Lys-259. Position 280 is an N6-acetyllysine (Lys-280).

It belongs to the short-chain dehydrogenases/reductases (SDR) family. In terms of assembly, homotetramer. In terms of processing, acetylation of Lys-132 is observed in liver mitochondria from fasted mice but not from fed mice.

It is found in the mitochondrion inner membrane. The protein localises to the mitochondrion matrix. It catalyses the reaction (R)-3-hydroxybutanoate + NAD(+) = acetoacetate + NADH + H(+). Requires phosphatidylcholine as an allosteric activator for enzymatic activity. In Mus musculus (Mouse), this protein is D-beta-hydroxybutyrate dehydrogenase, mitochondrial.